Reading from the N-terminus, the 347-residue chain is 3-isopropylmalate dehydrogenase (347 aa).

Arg94, Arg104, Arg128, and Asp219 together coordinate substrate. Asp219, Asp243, and Asp247 together coordinate Mg(2+). 279-291 is an NAD(+) binding site; it reads GSAPDIAGQGKAD.

This sequence belongs to the isocitrate and isopropylmalate dehydrogenases family. LeuB type 2 subfamily. Homodimer. The cofactor is Mg(2+). Mn(2+) is required as a cofactor.

It is found in the cytoplasm. It carries out the reaction (2R,3S)-3-isopropylmalate + NAD(+) = 4-methyl-2-oxopentanoate + CO2 + NADH. It functions in the pathway amino-acid biosynthesis; L-leucine biosynthesis; L-leucine from 3-methyl-2-oxobutanoate: step 3/4. In terms of biological role, catalyzes the oxidation of 3-carboxy-2-hydroxy-4-methylpentanoate (3-isopropylmalate) to 3-carboxy-4-methyl-2-oxopentanoate. The product decarboxylates to 4-methyl-2 oxopentanoate. The chain is 3-isopropylmalate dehydrogenase from Streptomyces griseus subsp. griseus (strain JCM 4626 / CBS 651.72 / NBRC 13350 / KCC S-0626 / ISP 5235).